The sequence spans 612 residues: Protein lin-61 (612 aa).

4 MBT repeats span residues 143–249, 263–380, 381–501, and 508–607; these read YLWE…MDKI, NDMV…GYQL, NAKK…LVPP, and FRWD…LQPP.

As to quaternary structure, interacts preferentially with histone H3 that is dimethylated or trimethylated at 'Lys-9'.

Its subcellular location is the nucleus. It is found in the chromosome. In terms of biological role, synthetic multivulva class B (synMuvB) protein required to repress the induction of vulval development by Ras signaling. Unlike other synMuv proteins it does not associate with the multiprotein DRM complex and the NuRD-like complex. Interaction with methylated histone H3 is essential for vulva development. It has a role in maintaining genome stability. The chain is Protein lin-61 (lin-61) from Caenorhabditis elegans.